Reading from the N-terminus, the 406-residue chain is MNFWTLLLPPIAGTVIGYFTNDIAINMLFRPYKAIYIGDRRLPFTPGLIPANQDRLARNISRIIMGSLLTPEEIQKLAQKLLQTERIEAAIRWLLQLAFAQIQGEQEQKTAGILAAILRDLASESLPRLIKVWSREDTFLEAQVYQIFDQLLLDFKLTEAQARQLTDWLLRTVLTPDILRQATIDFLTDKNIEIIDTSLREKTSGTYWVVANLFGVKNSLTRLRAFCLEEREIANARLQELILTLEIRLKLRLWLQGLSLQNLPVSTVRQLRKSFHQTIRQYFQNKGAGLMEYIGESVDWDNLSVVILRRLQASQVLDSSLGVVSQELSLLLDRYLEKDLEKIISQVIPILAIDQVIIERVNNTSPRELERAIQGIVKNELQAIVNLGGVLGFLVGVAQSVILLLN.

Residues 384–404 form a helical membrane-spanning segment; the sequence is IVNLGGVLGFLVGVAQSVILL.

The protein belongs to the UPF0754 family.

The protein resides in the cell inner membrane. This chain is UPF0754 membrane protein SYNPCC7002_A1087, found in Picosynechococcus sp. (strain ATCC 27264 / PCC 7002 / PR-6) (Agmenellum quadruplicatum).